Reading from the N-terminus, the 176-residue chain is MKWRSTTVVCVRRNDSVVMISDGQVTYGNTILKGNAKKVRKMGDGNVLAGFAGSVADAMALFDRFEAKYREWGGNLLKAAVELAKDWRTDRVLRRLEAMLLVADKKYTFIVSGTGEVIQPEDDIASIGSGSPYAIAAGKALLRHTDLSAKEIALEAIKIASEICIYTNDNFTIEEL.

Thr6 is a catalytic residue. The Na(+) site is built by Ser161, Cys164, and Thr167.

The protein belongs to the peptidase T1B family. HslV subfamily. As to quaternary structure, a double ring-shaped homohexamer of HslV is capped on each side by a ring-shaped HslU homohexamer. The assembly of the HslU/HslV complex is dependent on binding of ATP.

The protein resides in the cytoplasm. It carries out the reaction ATP-dependent cleavage of peptide bonds with broad specificity.. With respect to regulation, allosterically activated by HslU binding. Functionally, protease subunit of a proteasome-like degradation complex believed to be a general protein degrading machinery. In Thermosipho africanus (strain TCF52B), this protein is ATP-dependent protease subunit HslV.